Consider the following 249-residue polypeptide: Voltage-gated potassium channel subunit beta-3 (249 aa).

Residues Asn44, Ser74, Arg75, Gln100, Trp129, Ser130, Pro131, Leu132, Ala133, Cys134, Lys140, Lys150, Gly209, Ser211, Gln215, and Glu218 each coordinate NADP(+).

This sequence belongs to the shaker potassium channel beta subunit family. As to quaternary structure, forms heteromultimeric complex with alpha subunits. Interacts with KCNA5 and KCNB2. Strong expression in brain, with highest levels in neocortical and allocortical regions, hippocampus, olfactory bulb and cerebellum. Also strong in kidney. Weak expression in lung, skeletal muscle and heart.

The protein localises to the cytoplasm. Regulatory subunit of the voltage-gated potassium (Kv) channels composed of pore-forming and potassium-conducting alpha subunits and of regulatory beta subunit. The beta-3/KCNAB3 subunit may mediate closure of potassium channels. Enhances the expression of Kv2.2/KCNB2 alpha subunit-containing Kv channels but not Kv2.1/KCNB1. May display nicotinamide adenine dinucleotide phosphate (NADPH)-dependent aldoketoreductase activity. The binding of oxidized and reduced NADP(H) cofactors may be required for the regulation of potassium channel activity. The chain is Voltage-gated potassium channel subunit beta-3 from Mus musculus (Mouse).